We begin with the raw amino-acid sequence, 125 residues long: Desulfoferrodoxin homolog (125 aa).

Cysteine 10, cysteine 13, cysteine 29, cysteine 30, histidine 49, histidine 69, histidine 75, cysteine 116, and histidine 119 together coordinate Fe cation.

The protein belongs to the desulfoferrodoxin family. It depends on Fe(3+) as a cofactor. Cu(2+) is required as a cofactor.

The polypeptide is Desulfoferrodoxin homolog (Archaeoglobus fulgidus (strain ATCC 49558 / DSM 4304 / JCM 9628 / NBRC 100126 / VC-16)).